A 339-amino-acid polypeptide reads, in one-letter code: MNSYWLNIYKPRGISSAKLVSMVKKILGKEVKVGHAGTLDVEAEGILPLAVGEATKLIQLLIDAKKTYIFTVKFGTKTDSGDYAGTVIATKDYIPSQEEAYNVCSKFIGNVTQIPPAFSALKVNGVRAYKLAREGKEVELKPRNITIYNLKCLNFDEKNATASYYTECSKGTYIRTLAEDLALSLQSLGFVIELRRTQVGIFKEENAIRIKSPDEITKNFLEEKSIKIEAILDDILVLDATDSQAQQIKYGQKCLFNYEEDFRRLSKFAYREEFEENTERSTAAYTLVREDANTGLTYKLPLEVELSVSLLWVRYKGNLLAIGSLNKSCFNSLRVFNLL.

Residue Asp40 is the Nucleophile of the active site. The region spanning Phe262–Ser307 is the RPE1 insert domain.

It belongs to the pseudouridine synthase TruB family. Type 1 subfamily.

The enzyme catalyses uridine(55) in tRNA = pseudouridine(55) in tRNA. Functionally, responsible for synthesis of pseudouridine from uracil-55 in the psi GC loop of transfer RNAs. The sequence is that of tRNA pseudouridine synthase B from Rickettsia felis (strain ATCC VR-1525 / URRWXCal2) (Rickettsia azadi).